The sequence spans 126 residues: Large ribosomal subunit protein bL17 (126 aa).

It belongs to the bacterial ribosomal protein bL17 family. In terms of assembly, part of the 50S ribosomal subunit. Contacts protein L32.

The protein is Large ribosomal subunit protein bL17 of Vibrio parahaemolyticus serotype O3:K6 (strain RIMD 2210633).